A 370-amino-acid polypeptide reads, in one-letter code: MAIISSRAAGAEDPGQRQQKSSARRRESKLAFARAEGLLQPQAHPSEAQEESLRPRTLAEYIGQTELKEVLSIAIAAARARGEPLDHLLFYGPPGLGKTTVAAVLAAEMGSRFYMTTAPALESPRDIAGYLVRLKQGDVLFIDEIHRLPKVTEELLYPAMEDFRLDITVGKGRSARITSIPLERFTLIGATTRIGALTSPLRDRFGQVQRLRFYEPHELAEIVLRSARLLNTSIDRAGAEEIARRSRGTPRIANRLLKRVRDYAQVRGDGHISREVAAAALELFQVDPMGLDWTDRKLLTVLVEQFGGGPVGLETMAAVTGEDPQTIEEVYEPYLLQIGYLQRTPRGRVVTPAALQHLGYTAQSPLPVWS.

The tract at residues Met1 to Arg54 is disordered. A large ATPase domain (RuvB-L) region spans residues Asp13–Tyr214. Residues Leu53, Arg54, Gly95, Lys98, Thr99, Thr100, Glu161–Phe163, Arg204, Tyr214, and Arg251 each bind ATP. Residue Thr99 coordinates Mg(2+). Positions Glu215–Gln285 are small ATPAse domain (RuvB-S). Residues Pro288–Ser370 are head domain (RuvB-H). Residues Arg343 and Arg348 each coordinate DNA.

It belongs to the RuvB family. As to quaternary structure, homohexamer. Forms an RuvA(8)-RuvB(12)-Holliday junction (HJ) complex. HJ DNA is sandwiched between 2 RuvA tetramers; dsDNA enters through RuvA and exits via RuvB. An RuvB hexamer assembles on each DNA strand where it exits the tetramer. Each RuvB hexamer is contacted by two RuvA subunits (via domain III) on 2 adjacent RuvB subunits; this complex drives branch migration. In the full resolvosome a probable DNA-RuvA(4)-RuvB(12)-RuvC(2) complex forms which resolves the HJ.

It localises to the cytoplasm. It carries out the reaction ATP + H2O = ADP + phosphate + H(+). The RuvA-RuvB-RuvC complex processes Holliday junction (HJ) DNA during genetic recombination and DNA repair, while the RuvA-RuvB complex plays an important role in the rescue of blocked DNA replication forks via replication fork reversal (RFR). RuvA specifically binds to HJ cruciform DNA, conferring on it an open structure. The RuvB hexamer acts as an ATP-dependent pump, pulling dsDNA into and through the RuvAB complex. RuvB forms 2 homohexamers on either side of HJ DNA bound by 1 or 2 RuvA tetramers; 4 subunits per hexamer contact DNA at a time. Coordinated motions by a converter formed by DNA-disengaged RuvB subunits stimulates ATP hydrolysis and nucleotide exchange. Immobilization of the converter enables RuvB to convert the ATP-contained energy into a lever motion, pulling 2 nucleotides of DNA out of the RuvA tetramer per ATP hydrolyzed, thus driving DNA branch migration. The RuvB motors rotate together with the DNA substrate, which together with the progressing nucleotide cycle form the mechanistic basis for DNA recombination by continuous HJ branch migration. Branch migration allows RuvC to scan DNA until it finds its consensus sequence, where it cleaves and resolves cruciform DNA. This chain is Holliday junction branch migration complex subunit RuvB 2, found in Synechococcus sp. (strain JA-3-3Ab) (Cyanobacteria bacterium Yellowstone A-Prime).